The sequence spans 358 residues: Fructose-bisphosphate aldolase 5, cytosolic (358 aa).

The residue at position 2 (serine 2) is an N-acetylserine. Arginine 39 is a binding site for substrate. The residue at position 68 (cysteine 68) is an S-glutathionyl cysteine; transient. Cysteine 173 is modified (S-glutathionyl cysteine; transient; alternate). Cysteine 173 is modified (S-nitrosocysteine; transient; alternate). The active-site Proton acceptor is the glutamate 183. Lysine 225 (schiff-base intermediate with dihydroxyacetone-P) is an active-site residue. Substrate is bound by residues 266–268 and arginine 298; that span reads SGG. Phosphoserine is present on serine 350.

The protein belongs to the class I fructose-bisphosphate aldolase family. In terms of assembly, homotetramer. Interacts with TRX3. S-glutathionylated at Cys-68 and Cys-173. In terms of processing, S-nitrosylated at Cys-173. As to expression, expressed in rosette leaves and cauline leaves.

The protein localises to the cytoplasm. The protein resides in the cytosol. The catalysed reaction is beta-D-fructose 1,6-bisphosphate = D-glyceraldehyde 3-phosphate + dihydroxyacetone phosphate. It functions in the pathway carbohydrate degradation; glycolysis; D-glyceraldehyde 3-phosphate and glycerone phosphate from D-glucose: step 4/4. Functionally, fructose-bisphosphate aldolase that plays a key role in glycolysis and gluconeogenesis. The chain is Fructose-bisphosphate aldolase 5, cytosolic from Arabidopsis thaliana (Mouse-ear cress).